A 636-amino-acid polypeptide reads, in one-letter code: Polyglycine hydrolase (636 aa).

A signal peptide spans 1–22 (MHSLSLRRLLTSVLSLCSCSSA). Residues N30 and N151 are each glycosylated (N-linked (GlcNAc...) asparagine). A disulfide bond links C141 and C175. S363 is a catalytic residue. N-linked (GlcNAc...) asparagine glycans are attached at residues N383 and N481. A disordered region spans residues 512 to 540 (TEDRIVQESKNTGQDPVHPQSAKLVPGPH).

It belongs to the peptidase S12 family.

It is found in the secreted. It catalyses the reaction a glycyl-glycyl-[protein] + H2O = N-terminal glycyl-[protein] + [protein]-C-terminal glycine. Serine-type endopeptidase that cleaves Gly-Gly bonds in the polyglycine linker of host plant class IV chitinases to disrupt their chitin-binding, and thereby plays a role in lowering the defense responses of the host to the fungus. Degrades Z.mays Endochitinase A (CHIA) in vitro, although corn is not its host species. In Fusarium vanettenii (strain ATCC MYA-4622 / CBS 123669 / FGSC 9596 / NRRL 45880 / 77-13-4) (Fusarium solani subsp. pisi), this protein is Polyglycine hydrolase.